The sequence spans 1205 residues: MTNPPGQSVSANTVAESHEGEFGCTLMDLRKLMELRGADAVAQISAHYGGVQEICTRLKTSPIEGLSGNPADLEKRRLVFGKNVIPPKRPKTFLELVWEALQDVTLIILEIAAIISLVLSFYRPPGGDNEICGHIASSPEEEEEGETGWIEGAAILASVIIVVLVTAFNDWSKEKQFRGLQSRIELEQKFSIIRNGQLIQLPVAEIVVGDIAQIKYGDLLPADGILIQGNDLKIDESSLTGESDHVKKTLDKDPMLLSGTHVMEGSGRMVVTAVGVNSQTGIIFTLLGASEEEDDDDKKKKGKKQGAPENRNKAKTQDGVALEIQPLNSQEGLDSEDKEKKIARIPKKEKSVLQGKLTRLAVQIGKAGLIMSVLTVVILILYFVVDNFVIQRREWLPECTPVYIQYFVKFFIIGVTVLVVAVPEGLPLAVTISLAYSVKKMMKDNNLVRHLDACETMGNATAICSDKTGTLTMNRMTVVQAYIGGTHYRQIPQPDVFPPKVLELIVNGISINCAYTSKIQPPEKEGGLPRQVGNKTECGLLGFVTDLKQDYQAVRNEVPEEKLFKVYTFNSVRKSMSTVIRKPEGGFRMFSKGASEIMLRRCDRILNKEGEIKSFRSKDRDNMVRNVIEPMASEGLRTICLAYRDFDGTEPSWDIEGEILTSLICIAVVGIEDPVRPEVPDAIAKCKRAGITVRMVTGDNVNTARAIATKCGILTPKDDFLCLEGKEFNSLIRNEKGEVEQEKLDKIWPKLRVLARSSPTDKHTLVKGIIDSTAGEQRQVVAVTGDGTNDGPALKKADVGFAMGIAGTDVAKEASDIILTDDNFTSIVKAVMWGRNVYDSISKFLQFQLTVNVVAVIVAFTGACITQDSPLKAVQMLWVNLIMDTFASLALATEPPTESLLRRRPYGRNKPLISRTMMKNILGHAVYQLLIVFLLVFAGDTLFDIDSGRKAPLNSPPSQHYTIVFNTFVLMQLFNEINARKIHGEKNVFAGVYRNIIFCTVVLGTFFCQIMIVELGGKPFSCTSLTMEQWMWCLFIGIGELLWGQVISAIPTKSLKFLKEAGHGSDKEDISRDTEGMDEIDLAEMELRRGQILWVRGLNRIQTQIRVVKLFHNNHEVAHKPKNRSSIHTFMTQPEYPADDELSQSFLDIQEGNPELVSKAGTSVLLLDGEAASHDNINNNAVDCHQVQIVASHSDSPLPSLETPV.

Over Met1–Ala100 the chain is Cytoplasmic. Residues Leu101 to Phe121 form a helical membrane-spanning segment. Residues Tyr122 to Thr147 are Extracellular-facing. The helical transmembrane segment at Gly148–Phe168 threads the bilayer. The Cytoplasmic segment spans residues Asn169–Leu369. The segment at Asp294–Asp318 is disordered. 2 positions are modified to phosphoserine: Ser329 and Ser335. The chain crosses the membrane as a helical span at residues Ile370 to Ile390. Residues Gln391–Lys409 are Extracellular-facing. The helical transmembrane segment at Phe410–Val430 threads the bilayer. Residues Thr431–Phe844 lie on the Cytoplasmic side of the membrane. The active-site 4-aspartylphosphate intermediate is Asp466. Asp786 and Asp790 together coordinate Mg(2+). Residues Leu845–Ile865 traverse the membrane as a helical segment. Over Thr866–Lys872 the chain is Extracellular. The chain crosses the membrane as a helical span at residues Ala873–Thr893. Over Glu894–Lys919 the chain is Cytoplasmic. A helical transmembrane segment spans residues Asn920–Leu942. The Extracellular segment spans residues Phe943–Pro956. A helical transmembrane segment spans residues Pro957–Ala979. Residues Arg980–Asn995 lie on the Cytoplasmic side of the membrane. A helical membrane pass occupies residues Ile996–Gly1016. Residues Gly1017–Gln1029 lie on the Extracellular side of the membrane. Residues Trp1030 to Ile1050 traverse the membrane as a helical segment. Topologically, residues Pro1051–Val1205 are cytoplasmic. Phosphoserine occurs at positions 1065 and 1071. Arg1072 carries the omega-N-methylarginine modification. A calmodulin-binding subdomain A region spans residues Leu1087–Gln1104. A Phosphothreonine; by PKC modification is found at Thr1103. Residues Ile1105–Asn1114 form a calmodulin-binding subdomain B region. Ser1145 carries the post-translational modification Phosphoserine.

This sequence belongs to the cation transport ATPase (P-type) (TC 3.A.3) family. Type IIB subfamily. Interacts with PDZD11. Interacts with SLC35G1 and STIM1. Interacts with calmodulin. As to expression, specifically expressed by sperm in testis (at protein level).

The protein localises to the membrane. It is found in the cell projection. It localises to the cilium. Its subcellular location is the flagellum membrane. It carries out the reaction Ca(2+)(in) + ATP + H2O = Ca(2+)(out) + ADP + phosphate + H(+). Activated by calcium/calmodulin. Its function is as follows. Calcium/calmodulin-regulated and magnesium-dependent enzyme that catalyzes the hydrolysis of ATP coupled with the transport of calcium out of the cell. By regulating sperm cell calcium homeostasis, may play a role in sperm motility. This Mus musculus (Mouse) protein is Plasma membrane calcium-transporting ATPase 4.